The chain runs to 204 residues: MKKIAIVGALLTSFVASSVWADAASDLKSRLDKVSSFHASFTQKVTDGSGNAVQEGQGDLWVKRPNLFNWHMTQPDESILVSDGKTLWFYNPFVEQATATLLKDATSNTPFMLIARNQTSDWQQYNIKQNGDDFVLTPKTSNGNLKQFTINVSNNGTINQFSAVEQDEQRSSYQLKSQQNGAIDASKFTFTPPQGVTVDDQRNK.

The first 21 residues, 1 to 21 (MKKIAIVGALLTSFVASSVWA), serve as a signal peptide directing secretion. Residues 169-204 (QRSSYQLKSQQNGAIDASKFTFTPPQGVTVDDQRNK) form a disordered region. The segment covering 171–181 (SSYQLKSQQNG) has biased composition (polar residues).

The protein belongs to the LolA family. Monomer.

The protein localises to the periplasm. Functionally, participates in the translocation of lipoproteins from the inner membrane to the outer membrane. Only forms a complex with a lipoprotein if the residue after the N-terminal Cys is not an aspartate (The Asp acts as a targeting signal to indicate that the lipoprotein should stay in the inner membrane). The sequence is that of Outer-membrane lipoprotein carrier protein from Enterobacter sp. (strain 638).